Consider the following 285-residue polypeptide: 2-dehydro-3-deoxyphosphooctonate aldolase (285 aa).

It belongs to the KdsA family.

The protein localises to the cytoplasm. The catalysed reaction is D-arabinose 5-phosphate + phosphoenolpyruvate + H2O = 3-deoxy-alpha-D-manno-2-octulosonate-8-phosphate + phosphate. It functions in the pathway carbohydrate biosynthesis; 3-deoxy-D-manno-octulosonate biosynthesis; 3-deoxy-D-manno-octulosonate from D-ribulose 5-phosphate: step 2/3. Its pathway is bacterial outer membrane biogenesis; lipopolysaccharide biosynthesis. The polypeptide is 2-dehydro-3-deoxyphosphooctonate aldolase (Verminephrobacter eiseniae (strain EF01-2)).